The following is a 334-amino-acid chain: Holliday junction branch migration complex subunit RuvB (334 aa).

The large ATPase domain (RuvB-L) stretch occupies residues 1–180 (MSEFLTPERT…FGIILELDFY (180 aa)). ATP contacts are provided by residues leucine 19, arginine 20, glycine 61, lysine 64, threonine 65, threonine 66, 127–129 (EDF), arginine 170, tyrosine 180, and arginine 217. A Mg(2+)-binding site is contributed by threonine 65. The small ATPAse domain (RuvB-S) stretch occupies residues 181–251 (TVKELKEIIK…IVLKTMEVLN (71 aa)). Residues 254 to 334 (AEGLDEFDRK…KYEVPENRLF (81 aa)) form a head domain (RuvB-H) region. DNA-binding residues include arginine 309 and arginine 314.

Belongs to the RuvB family. As to quaternary structure, homohexamer. Forms an RuvA(8)-RuvB(12)-Holliday junction (HJ) complex. HJ DNA is sandwiched between 2 RuvA tetramers; dsDNA enters through RuvA and exits via RuvB. An RuvB hexamer assembles on each DNA strand where it exits the tetramer. Each RuvB hexamer is contacted by two RuvA subunits (via domain III) on 2 adjacent RuvB subunits; this complex drives branch migration. In the full resolvosome a probable DNA-RuvA(4)-RuvB(12)-RuvC(2) complex forms which resolves the HJ.

The protein resides in the cytoplasm. It carries out the reaction ATP + H2O = ADP + phosphate + H(+). Functionally, the RuvA-RuvB-RuvC complex processes Holliday junction (HJ) DNA during genetic recombination and DNA repair, while the RuvA-RuvB complex plays an important role in the rescue of blocked DNA replication forks via replication fork reversal (RFR). RuvA specifically binds to HJ cruciform DNA, conferring on it an open structure. The RuvB hexamer acts as an ATP-dependent pump, pulling dsDNA into and through the RuvAB complex. RuvB forms 2 homohexamers on either side of HJ DNA bound by 1 or 2 RuvA tetramers; 4 subunits per hexamer contact DNA at a time. Coordinated motions by a converter formed by DNA-disengaged RuvB subunits stimulates ATP hydrolysis and nucleotide exchange. Immobilization of the converter enables RuvB to convert the ATP-contained energy into a lever motion, pulling 2 nucleotides of DNA out of the RuvA tetramer per ATP hydrolyzed, thus driving DNA branch migration. The RuvB motors rotate together with the DNA substrate, which together with the progressing nucleotide cycle form the mechanistic basis for DNA recombination by continuous HJ branch migration. Branch migration allows RuvC to scan DNA until it finds its consensus sequence, where it cleaves and resolves cruciform DNA. In Thermotoga petrophila (strain ATCC BAA-488 / DSM 13995 / JCM 10881 / RKU-1), this protein is Holliday junction branch migration complex subunit RuvB.